Reading from the N-terminus, the 114-residue chain is Hydrogenase maturation factor HypA (114 aa).

Residue His-2 participates in Ni(2+) binding. Zn(2+) contacts are provided by Cys-74, Cys-77, Cys-90, and Cys-93.

Belongs to the HypA/HybF family.

In terms of biological role, involved in the maturation of [NiFe] hydrogenases. Required for nickel insertion into the metal center of the hydrogenase. In Campylobacter jejuni subsp. jejuni serotype O:2 (strain ATCC 700819 / NCTC 11168), this protein is Hydrogenase maturation factor HypA.